The sequence spans 435 residues: 5-hydroxybenzimidazole synthase (435 aa).

Substrate contacts are provided by residues Met-95, Tyr-124, His-163, 186–188, 227–230, and Glu-266; these read SKG and NGLR. A Zn(2+)-binding site is contributed by His-270. Tyr-293 contacts substrate. Residue His-334 participates in Zn(2+) binding. [4Fe-4S] cluster is bound by residues Cys-410, Cys-413, and Cys-417.

It belongs to the ThiC family. 5-hydroxybenzimidazole synthase subfamily. Homodimer. The cofactor is [4Fe-4S] cluster.

It catalyses the reaction 5-amino-1-(5-phospho-beta-D-ribosyl)imidazole + AH2 + S-adenosyl-L-methionine = 5-hydroxybenzimidazole + 5'-deoxyadenosine + formate + L-methionine + A + NH4(+) + phosphate + 2 H(+). Catalyzes the conversion of aminoimidazole ribotide (AIR) to 5-hydroxybenzimidazole (5-HBI) in a radical S-adenosyl-L-methionine (SAM)-dependent reaction. Is thus involved in the anaerobic biosynthesis of the benzimidazole lower axial ligand of the cobamide produced by G.sulfurreducens. The sequence is that of 5-hydroxybenzimidazole synthase from Geobacter sulfurreducens (strain ATCC 51573 / DSM 12127 / PCA).